Reading from the N-terminus, the 144-residue chain is NADH dehydrogenase [ubiquinone] 1 alpha subcomplex subunit 13 (144 aa).

An N-acetylalanine modification is found at A2. Residues 30–51 (LSGYSMFAVGIGALLFGYWSMM) form a helical membrane-spanning segment.

As to quaternary structure, complex I is composed of 45 different subunits. Interacts with CARD15, but not with CARD4. Interacts with STAT3, but not with STAT1, STAT2 and STAT5A. Interacts with OLFM4.

It is found in the mitochondrion inner membrane. Its subcellular location is the nucleus. In terms of biological role, accessory subunit of the mitochondrial membrane respiratory chain NADH dehydrogenase (Complex I), that is believed not to be involved in catalysis. Complex I functions in the transfer of electrons from NADH to the respiratory chain. The immediate electron acceptor for the enzyme is believed to be ubiquinone. Involved in the interferon/all-trans-retinoic acid (IFN/RA) induced cell death. This apoptotic activity is inhibited by interaction with viral IRF1. Prevents the transactivation of STAT3 target genes. May play a role in CARD15-mediated innate mucosal responses and serve to regulate intestinal epithelial cell responses to microbes. The chain is NADH dehydrogenase [ubiquinone] 1 alpha subcomplex subunit 13 (NDUFA13) from Bos taurus (Bovine).